The following is a 481-amino-acid chain: Thyroid receptor-interacting protein 6 (481 aa).

Residues 1–12 (MSGPTWLPPKQP) show a composition bias toward pro residues. A disordered region spans residues 1–259 (MSGPTWLPPK…QVPLSQPPEE (259 aa)). Arginine 25 is modified (asymmetric dimethylarginine; alternate). Position 25 is an omega-N-methylarginine; alternate (arginine 25). Position 55 is a phosphotyrosine; by SRC (tyrosine 55). At serine 92 the chain carries Phosphoserine. Positions 108-122 (DGGRGHAPRRPDRQA) are enriched in basic and acidic residues. Omega-N-methylarginine is present on arginine 111. 2 stretches are compositionally biased toward low complexity: residues 153–173 (SPYG…AGPA) and 183–193 (PVRGCGPPRRG). Omega-N-methylarginine is present on residues arginine 185 and arginine 192. A Phosphoserine modification is found at serine 195. Position 211 is an omega-N-methylarginine (arginine 211). Residues 221-233 (SHREPGPGVKEEA) are compositionally biased toward basic and acidic residues. An Omega-N-methylarginine modification is found at arginine 243. At serine 254 the chain carries Phosphoserine. LIM zinc-binding domains lie at 284-321 (CGGC…QLRG), 344-403 (CSTC…FAPR), and 404-472 (CSVC…RIQE). The segment at 474-481 (SATVTTDC) is interaction with MAGI1 and PTPN13.

This sequence belongs to the zyxin/ajuba family. As to quaternary structure, specifically interacts with the ligand binding domain of the thyroid receptor (TR) in the presence of thyroid hormone. Interacts (via the third LIM domain and C-terminus) with PTPN13 (via the second PDZ domain). Interacts (via the second LIM domain or via the third LIM domain plus C-terminus) with PDLIM4 (via PDZ domain). Found in a complex with PTPN13 and PDLIM4. Interacts with SVIL isoform 2. Interacts with LPAR2 but not other LPA receptors. Interacts with PRKAA2. Interacts with MAGI1. Interacts with SCRIB. Post-translationally, phosphorylation at Tyr-55 by SRC is required for enhancement of lysophosphatidic acid-induced cell migration. Tyr-55 is dephosphorylated by PTPN13.

The protein resides in the cytoplasm. Its subcellular location is the cytoskeleton. It localises to the cell junction. The protein localises to the focal adhesion. It is found in the nucleus. Functionally, relays signals from the cell surface to the nucleus to weaken adherens junction and promote actin cytoskeleton reorganization and cell invasiveness. Involved in lysophosphatidic acid-induced cell adhesion and migration. Acts as a transcriptional coactivator for NF-kappa-B and JUN, and mediates the transrepression of these transcription factors induced by glucocorticoid receptor. This chain is Thyroid receptor-interacting protein 6 (TRIP6), found in Bos taurus (Bovine).